The chain runs to 797 residues: Protocadherin beta-11 (797 aa).

The signal sequence occupies residues 1–26 (MENGGTRTQQIRQVLLLFVLLGMSQA). Over 27-690 (GSETWSFSVA…AQTDFLTVYL (664 aa)) the chain is Extracellular. 5 Cadherin domains span residues 35–133 (VAEE…SPIF), 138–242 (MLLE…SPEF), 247–347 (YEVK…APEI), 352–451 (ITSP…APTF), and 456–561 (YTLF…SPFV). N-linked (GlcNAc...) asparagine glycans are attached at residues Asn418, Asn436, Asn487, and Asn567. In terms of domain architecture, Cadherin 6 spans 568–671 (GSAPCTELVP…LVDGFSQPFL (104 aa)). Residues 691–711 (VVALASVSSLFFFSVLLFVAV) traverse the membrane as a helical segment. The Cytoplasmic segment spans residues 712 to 797 (RLCRRSRAAS…TFQNSFGFNF (86 aa)).

The protein localises to the cell membrane. Functionally, potential calcium-dependent cell-adhesion protein. May be involved in the establishment and maintenance of specific neuronal connections in the brain. The polypeptide is Protocadherin beta-11 (PCDHB11) (Pan troglodytes (Chimpanzee)).